The chain runs to 462 residues: Cysteine--tRNA ligase (462 aa).

Cysteine 29 is a Zn(2+) binding site. The 'HIGH' region signature appears at 31–41; sequence PTVYDHAHIGN. Zn(2+) contacts are provided by cysteine 214, histidine 239, and glutamate 243. The short motif at 272-276 is the 'KMSKS' region element; it reads KMSKS. Lysine 275 is a binding site for ATP.

It belongs to the class-I aminoacyl-tRNA synthetase family. As to quaternary structure, monomer. Requires Zn(2+) as cofactor.

It is found in the cytoplasm. The enzyme catalyses tRNA(Cys) + L-cysteine + ATP = L-cysteinyl-tRNA(Cys) + AMP + diphosphate. The protein is Cysteine--tRNA ligase of Azorhizobium caulinodans (strain ATCC 43989 / DSM 5975 / JCM 20966 / LMG 6465 / NBRC 14845 / NCIMB 13405 / ORS 571).